A 629-amino-acid polypeptide reads, in one-letter code: DNA mismatch repair protein MutL (629 aa).

It belongs to the DNA mismatch repair MutL/HexB family.

This protein is involved in the repair of mismatches in DNA. It is required for dam-dependent methyl-directed DNA mismatch repair. May act as a 'molecular matchmaker', a protein that promotes the formation of a stable complex between two or more DNA-binding proteins in an ATP-dependent manner without itself being part of a final effector complex. The polypeptide is DNA mismatch repair protein MutL (Haemophilus influenzae (strain 86-028NP)).